A 198-amino-acid chain; its full sequence is Alkyl hydroperoxide reductase C (198 aa).

One can recognise a Thioredoxin domain in the interval 2–163 (TLVTQKAPNF…MIRMIDALNF (162 aa)). The Cysteine sulfenic acid (-SOH) intermediate role is filled by C50.

It belongs to the peroxiredoxin family. AhpC/Prx1 subfamily. Homodimer; disulfide-linked, upon oxidation. 5 homodimers assemble to form a ring-like decamer.

It localises to the cytoplasm. The catalysed reaction is a hydroperoxide + NADH + H(+) = an alcohol + NAD(+) + H2O. Thiol-specific peroxidase that catalyzes the reduction of hydrogen peroxide and organic hydroperoxides to water and alcohols, respectively. Plays a role in cell protection against oxidative stress by detoxifying peroxides. The protein is Alkyl hydroperoxide reductase C of Buchnera aphidicola subsp. Schizaphis graminum (strain Sg).